We begin with the raw amino-acid sequence, 123 residues long: Small ribosomal subunit protein uS13 (123 aa).

Residues 93-123 (RRNLPVRGQKTKTNARTRKGPKRAIGGKKKK) are disordered.

This sequence belongs to the universal ribosomal protein uS13 family. As to quaternary structure, part of the 30S ribosomal subunit. Forms a loose heterodimer with protein S19. Forms two bridges to the 50S subunit in the 70S ribosome.

In terms of biological role, located at the top of the head of the 30S subunit, it contacts several helices of the 16S rRNA. In the 70S ribosome it contacts the 23S rRNA (bridge B1a) and protein L5 of the 50S subunit (bridge B1b), connecting the 2 subunits; these bridges are implicated in subunit movement. Contacts the tRNAs in the A and P-sites. The protein is Small ribosomal subunit protein uS13 of Clostridium botulinum (strain Loch Maree / Type A3).